Reading from the N-terminus, the 311-residue chain is Telomere-binding protein I1 homolog (311 aa).

It belongs to the chordopoxvirinae I1 family.

It is found in the virion. In terms of biological role, late DNA-binding protein which binds to the hairpin form of the viral telomeric sequence. Required for the production of mature virions (MV). This chain is Telomere-binding protein I1 homolog, found in Fowlpox virus (strain NVSL) (FPV).